The primary structure comprises 241 residues: Corrinoid adenosyltransferase MMAB (241 aa).

The N-terminal 26 residues, M1 to F26, are a transit peptide targeting the mitochondrion. Residues Q27–R69 are disordered. ATP contacts are provided by residues T54–S63 and K72. Position 128 is a phosphoserine (S128). R184 to R188 is a binding site for ATP. K205 carries the post-translational modification N6-succinyllysine. N208 serves as a coordination point for ATP. K224 carries the post-translational modification N6-acetyllysine; alternate. K224 bears the N6-succinyllysine; alternate mark.

It belongs to the Cob(I)alamin adenosyltransferase family. Homotrimer.

The protein localises to the mitochondrion. It carries out the reaction cob(I)alamin-[corrinoid adenosyltransferase] + ATP = apo-[corrinoid adenosyltransferase] + adenosylcob(III)alamin + triphosphate. Functionally, converts cob(I)alamin to adenosylcobalamin (adenosylcob(III)alamin), a coenzyme for methylmalonyl-CoA mutase, therefore participates in the final step of the vitamin B12 conversion. Generates adenosylcobalamin (AdoCbl) and directly delivers the cofactor to MUT in a transfer that is stimulated by ATP-binding to MMAB and gated by MMAA. This chain is Corrinoid adenosyltransferase MMAB, found in Bos taurus (Bovine).